A 275-amino-acid chain; its full sequence is Shikimate dehydrogenase (NADP(+)) (275 aa).

Shikimate-binding positions include 19 to 21 and Thr-66; that span reads SIS. Catalysis depends on Lys-70, which acts as the Proton acceptor. Glu-82 is a binding site for NADP(+). Positions 91 and 106 each coordinate shikimate. Residues 129-133, 153-158, and Ile-219 contribute to the NADP(+) site; these read GAGGA and NRTYER. Tyr-221 serves as a coordination point for shikimate. Gly-242 lines the NADP(+) pocket.

It belongs to the shikimate dehydrogenase family. As to quaternary structure, homodimer.

The enzyme catalyses shikimate + NADP(+) = 3-dehydroshikimate + NADPH + H(+). Its pathway is metabolic intermediate biosynthesis; chorismate biosynthesis; chorismate from D-erythrose 4-phosphate and phosphoenolpyruvate: step 4/7. In terms of biological role, involved in the biosynthesis of the chorismate, which leads to the biosynthesis of aromatic amino acids. Catalyzes the reversible NADPH linked reduction of 3-dehydroshikimate (DHSA) to yield shikimate (SA). The protein is Shikimate dehydrogenase (NADP(+)) of Dictyoglomus turgidum (strain DSM 6724 / Z-1310).